A 456-amino-acid polypeptide reads, in one-letter code: Putrescine--pyruvate aminotransferase (456 aa).

Y156 is a substrate binding site. D262 is a pyridoxal 5'-phosphate binding site. K291 is subject to N6-(pyridoxal phosphate)lysine. Substrate is bound by residues G322 and R417.

Belongs to the class-III pyridoxal-phosphate-dependent aminotransferase family. Pyridoxal 5'-phosphate serves as cofactor.

The enzyme catalyses putrescine + pyruvate = 4-aminobutanal + L-alanine. The protein operates within amine and polyamine degradation; putrescine degradation; 4-aminobutanal from putrescine (transaminase route). In terms of biological role, involved in the putrescine catabolism. Catalyzes the transfer of the amino group from putrescine to pyruvate to yield 4-aminobutanal and alanine. This is Putrescine--pyruvate aminotransferase from Pseudomonas aeruginosa (strain ATCC 15692 / DSM 22644 / CIP 104116 / JCM 14847 / LMG 12228 / 1C / PRS 101 / PAO1).